We begin with the raw amino-acid sequence, 429 residues long: MATEQRPFQLVVFGASGFTGQFVTEEVAREQMASEQSSRLPWAVAGRSKEKLQQVLEKAAQKLGRATLSSEVGIIICDISNPASLDEMAKKATLVLNCVGPYRFYGEPVVKACIENGTSCIDICGEPQFLELMHVKYHEKAAEKGVYIIGSSGFDSIPADLGVLYTRNQMNGTLTAVESFLTINSGPEGLCIHDGTWKSAIYGFGDKGSLRKLRSVSNLKPVPVIGSKLKRRWPVSYCRELNSYAIPFLGSDMSVVKRTQRYLHENLEDSPVQYAAYITVGGITSVIKLMFAGLFFLFFVKFSIGRQLLVKFPWLFSFGYFSKRGPTQKQMDESSFTMTFFGQGYSHGVSAEKNKPNIRICTQVKGPEAGYVATPIAMVQAAVTFLNDASDLPKGGGVFTPGAAFSRTKLIDRLNQHGIQFSVISSSEV.

A2 carries the N-acetylalanine modification. Phosphoserine is present on residues S209, S215, and S217.

This sequence belongs to the saccharopine dehydrogenase family.

This is Saccharopine dehydrogenase-like oxidoreductase (Sccpdh) from Rattus norvegicus (Rat).